Reading from the N-terminus, the 471-residue chain is Glutamate--tRNA ligase 1 (471 aa).

The 'HIGH' region signature appears at Pro15–Gly25. The short motif at Lys243 to Arg247 is the 'KMSKS' region element. Residue Lys246 coordinates ATP.

The protein belongs to the class-I aminoacyl-tRNA synthetase family. Glutamate--tRNA ligase type 1 subfamily. Monomer.

It is found in the cytoplasm. The enzyme catalyses tRNA(Glu) + L-glutamate + ATP = L-glutamyl-tRNA(Glu) + AMP + diphosphate. Its function is as follows. Catalyzes the attachment of glutamate to tRNA(Glu) in a two-step reaction: glutamate is first activated by ATP to form Glu-AMP and then transferred to the acceptor end of tRNA(Glu). This Cereibacter sphaeroides (strain ATCC 17023 / DSM 158 / JCM 6121 / CCUG 31486 / LMG 2827 / NBRC 12203 / NCIMB 8253 / ATH 2.4.1.) (Rhodobacter sphaeroides) protein is Glutamate--tRNA ligase 1.